We begin with the raw amino-acid sequence, 250 residues long: Ubiquinone/menaquinone biosynthesis C-methyltransferase UbiE (250 aa).

S-adenosyl-L-methionine-binding positions include Thr-74, Asp-94, 122 to 123, and Ser-139; that span reads DA.

Belongs to the class I-like SAM-binding methyltransferase superfamily. MenG/UbiE family.

It carries out the reaction a 2-demethylmenaquinol + S-adenosyl-L-methionine = a menaquinol + S-adenosyl-L-homocysteine + H(+). It catalyses the reaction a 2-methoxy-6-(all-trans-polyprenyl)benzene-1,4-diol + S-adenosyl-L-methionine = a 5-methoxy-2-methyl-3-(all-trans-polyprenyl)benzene-1,4-diol + S-adenosyl-L-homocysteine + H(+). Its pathway is quinol/quinone metabolism; menaquinone biosynthesis; menaquinol from 1,4-dihydroxy-2-naphthoate: step 2/2. It participates in cofactor biosynthesis; ubiquinone biosynthesis. Methyltransferase required for the conversion of demethylmenaquinol (DMKH2) to menaquinol (MKH2) and the conversion of 2-polyprenyl-6-methoxy-1,4-benzoquinol (DDMQH2) to 2-polyprenyl-3-methyl-6-methoxy-1,4-benzoquinol (DMQH2). The polypeptide is Ubiquinone/menaquinone biosynthesis C-methyltransferase UbiE (Cereibacter sphaeroides (strain ATCC 17029 / ATH 2.4.9) (Rhodobacter sphaeroides)).